A 642-amino-acid chain; its full sequence is DNA primase (642 aa).

The CHC2-type zinc finger occupies 41-65 (CPFHNEKSPSFHVRPNHGHFHCFGC). A Toprim domain is found at 262-348 (HQAVVVEGYT…AGKSFVAVAA (87 aa)). Residues E268, D319, and D321 each coordinate Mg(2+). The segment at 445–480 (NRRSVPERTRRRSVSVEQSPFMQPPGAPADQLAARP) is disordered.

Belongs to the DnaG primase family. Monomer. Interacts with DnaB. Requires Zn(2+) as cofactor. The cofactor is Mg(2+).

The catalysed reaction is ssDNA + n NTP = ssDNA/pppN(pN)n-1 hybrid + (n-1) diphosphate.. RNA polymerase that catalyzes the synthesis of short RNA molecules used as primers for DNA polymerase during DNA replication. This Mycobacterium leprae (strain TN) protein is DNA primase.